The following is a 98-amino-acid chain: Small ribosomal subunit protein uS17 (98 aa).

The protein belongs to the universal ribosomal protein uS17 family. As to quaternary structure, part of the 30S ribosomal subunit.

In terms of biological role, one of the primary rRNA binding proteins, it binds specifically to the 5'-end of 16S ribosomal RNA. In Leptothrix cholodnii (strain ATCC 51168 / LMG 8142 / SP-6) (Leptothrix discophora (strain SP-6)), this protein is Small ribosomal subunit protein uS17.